We begin with the raw amino-acid sequence, 38 residues long: Photosystem II reaction center protein X 1 (38 aa).

Residues 8–28 (FLWSLLYGAVVLGLLFGAIVF) traverse the membrane as a helical segment.

The protein belongs to the PsbX family. Type 1 subfamily. As to quaternary structure, PSII is composed of 1 copy each of membrane proteins PsbA, PsbB, PsbC, PsbD, PsbE, PsbF, PsbH, PsbI, PsbJ, PsbK, PsbL, PsbM, PsbT, PsbX, PsbY, PsbZ, Psb30/Ycf12, peripheral proteins PsbO, CyanoQ (PsbQ), PsbU, PsbV and a large number of cofactors. It forms dimeric complexes.

The protein resides in the cellular thylakoid membrane. In terms of biological role, involved in the binding and/or turnover of quinones at the Q(B) site of photosystem II (PSII). PSII is a light-driven water plastoquinone oxidoreductase, using light energy to abstract electrons from H(2)O, generating a proton gradient subsequently used for ATP formation. This Synechococcus sp. (strain JA-3-3Ab) (Cyanobacteria bacterium Yellowstone A-Prime) protein is Photosystem II reaction center protein X 1.